Here is a 1129-residue protein sequence, read N- to C-terminus: Phospholipid-transporting ATPase 11C (1129 aa).

The Cytoplasmic portion of the chain corresponds to 1–83; the sequence is MFRRTLNRLC…IIFLVQVTVD (83 aa). A helical membrane pass occupies residues 84–104; the sequence is TPTSPVTSGLPLFFVITVTAI. Residues 105–287 are Extracellular-facing; the sequence is KQGYEDWLRH…SQKCSAVEKS (183 aa). Residues 288–308 traverse the membrane as a helical segment; the sequence is INAFLIVYLFILLTKAAVCTT. Residues 309 to 343 lie on the Cytoplasmic side of the membrane; the sequence is LKYVWQSSPYNDEPWYNQKTQKERETFQVLKMFTD. A helical transmembrane segment spans residues 344–364; sequence FLSFMVLFNFIIPVSMYVTVE. The Extracellular segment spans residues 365 to 876; it reads MQKFLGSFFI…YVRIAHLVQY (512 aa). Catalysis depends on aspartate 409, which acts as the 4-aspartylphosphate intermediate. Aspartate 409, lysine 410, and threonine 411 together coordinate ATP. Position 409 (aspartate 409) interacts with Mg(2+). Threonine 411 contacts Mg(2+). Position 442 is a phosphoserine (serine 442). Residues glutamate 498, phenylalanine 540, lysine 563, and arginine 594 each contribute to the ATP site. Residues 607–643 are a coiled coil; sequence DFERINAQLVEAKMALQDREEKLEKVFDEIETNMNLI. Residues threonine 674, glycine 675, and aspartate 676 each coordinate ATP. A coiled-coil region spans residues 695 to 726; sequence TELLELTTKTIEESERKEDRLHELLIEYRKKL. 2 residues coordinate ATP: arginine 789 and lysine 795. Aspartate 816 is a binding site for Mg(2+). 2 residues coordinate ATP: asparagine 819 and aspartate 820. Residue aspartate 820 participates in Mg(2+) binding. Residues 877-897 traverse the membrane as a helical segment; the sequence is FFYKNLCFILPQFLYQFFCGF. At 898–905 the chain is on the cytoplasmic side; sequence SQQPLYDA. The chain crosses the membrane as a helical span at residues 906 to 926; sequence AYLTMYNICFTSLPILAYSLL. Residues 927–952 lie on the Extracellular side of the membrane; it reads EQHINIDTLTADPRLYMKITGNAMLQ. The helical transmembrane segment at 953-973 threads the bilayer; it reads LGPFLHWTFLAAFEGTVFFFG. Residues 974-988 lie on the Cytoplasmic side of the membrane; sequence TYFLFQTSSLEDNGK. Residues 989-1009 traverse the membrane as a helical segment; that stretch reads IYGNWTFGTIVFTVLVFTVTL. Over 1010 to 1023 the chain is Extracellular; that stretch reads KLALDTRFWTWINH. A helical transmembrane segment spans residues 1024 to 1044; sequence FVIWGSLAFYVFFSFFWGGII. Topologically, residues 1045–1066 are cytoplasmic; the sequence is WPFLKQQRMYFVFAQMLCSVST. Residues 1067 to 1087 traverse the membrane as a helical segment; that stretch reads WLAIILLIFISLFPEILLIVV. The Extracellular segment spans residues 1088 to 1129; sequence KNVRRRSARRNLSCRRASDSLSARPSVRPLLLRTFSDESNIL. Residues serine 1105, serine 1113, and serine 1123 each carry the phosphoserine modification. The Di-leucine motif signature appears at 1113-1118; the sequence is SVRPLL.

Belongs to the cation transport ATPase (P-type) (TC 3.A.3) family. Type IV subfamily. As to quaternary structure, component of a P4-ATPase flippase complex which consists of a catalytic alpha subunit ATP11C and an accessory beta subunit TMEM30A. The cofactor is Mg(2+). Proteolytically cleaved by CASP3, CASP6 and CASP7. Post-translationally, phosphorylated at Ser-1113 likely by PRKCA; this creates a functional di-leucine motif that is sufficient for endocytosis. As to expression, widely expressed. Expressed in retina, brain, liver and testes (at protein level). Expressed in lung, bone marrow, lymph nodes, prostate, ovary and uterus. Expressed in fetus.

The protein resides in the cell membrane. The protein localises to the endoplasmic reticulum membrane. Its subcellular location is the early endosome membrane. It localises to the recycling endosome membrane. It carries out the reaction ATP + H2O + phospholipidSide 1 = ADP + phosphate + phospholipidSide 2.. It catalyses the reaction a 1,2-diacyl-sn-glycero-3-phospho-L-serine(out) + ATP + H2O = a 1,2-diacyl-sn-glycero-3-phospho-L-serine(in) + ADP + phosphate + H(+). The catalysed reaction is a 1,2-diacyl-sn-glycero-3-phosphoethanolamine(out) + ATP + H2O = a 1,2-diacyl-sn-glycero-3-phosphoethanolamine(in) + ADP + phosphate + H(+). Catalytic component of a P4-ATPase flippase complex which catalyzes the hydrolysis of ATP coupled to the transport of aminophospholipids, phosphatidylserines (PS) and phosphatidylethanolamines (PE), from the outer to the inner leaflet of the plasma membrane. Major PS-flippase in immune cell subsets. In erythrocyte plasma membrane, it is required to maintain PS in the inner leaflet preventing its exposure on the surface. This asymmetric distribution is critical for the survival of erythrocytes in circulation since externalized PS is a phagocytic signal for erythrocyte clearance by splenic macrophages. Required for B cell differentiation past the pro-B cell stage. Seems to mediate PS flipping in pro-B cells. May be involved in the transport of cholestatic bile acids. This Mus musculus (Mouse) protein is Phospholipid-transporting ATPase 11C.